Consider the following 584-residue polypeptide: Interferon regulatory factor 2-binding protein 1 (584 aa).

The interval 60–127 is disordered; the sequence is VLPEGRSPGP…SGRLPLPSPA (68 aa). A phosphoserine mark is found at Ser66 and Ser125. The residue at position 177 (Arg177) is an Omega-N-methylarginine. At Ser186 the chain carries Phosphoserine. A coiled-coil region spans residues 197 to 217; that stretch reads EKEKQQRNADCLAELNEAMRG. Lys227 participates in a covalent cross-link: Glycyl lysine isopeptide (Lys-Gly) (interchain with G-Cter in SUMO2). The tract at residues 346 to 420 is disordered; the sequence is PAEALPQQYP…PYSAETPGVP (75 aa). Pro residues predominate over residues 354–369; that stretch reads YPEPAPAALCGPPPRA. Phosphoserine is present on residues Ser371, Ser384, Ser421, and Ser436. A disordered region spans residues 433–495; that stretch reads LGHSPKDPGG…VSGGGSGTGA (63 aa). Lys438 participates in a covalent cross-link: Glycyl lysine isopeptide (Lys-Gly) (interchain with G-Cter in SUMO2). Over residues 449-463 the composition is skewed to low complexity; sequence AGGASPAASSTAQPP. A phosphoserine mark is found at Ser453 and Ser457. Residues 503-550 form an RING-type; degenerate zinc finger; that stretch reads CTLCRERLEDTHFVQCPSVPGHKFCFPCSREFIKAQGPAGEVYCPSGD. The tract at residues 503–550 is cys-rich; that stretch reads CTLCRERLEDTHFVQCPSVPGHKFCFPCSREFIKAQGPAGEVYCPSGD.

Belongs to the IRF2BP family. In terms of assembly, interacts with IRF2. Part of a corepressor complex containing IRF2 and IRF2BP2. Interacts with JDP2.

The protein localises to the nucleus. It catalyses the reaction S-ubiquitinyl-[E2 ubiquitin-conjugating enzyme]-L-cysteine + [acceptor protein]-L-lysine = [E2 ubiquitin-conjugating enzyme]-L-cysteine + N(6)-ubiquitinyl-[acceptor protein]-L-lysine.. Acts as a transcriptional corepressor in a IRF2-dependent manner; this repression is not mediated by histone deacetylase activities. May act as an E3 ligase towards JDP2, enhancing its polyubiquitination. Represses ATF2-dependent transcriptional activation. The sequence is that of Interferon regulatory factor 2-binding protein 1 (IRF2BP1) from Homo sapiens (Human).